Reading from the N-terminus, the 842-residue chain is DNA gyrase subunit A (842 aa).

One can recognise a Topo IIA-type catalytic domain in the interval 42 to 511 (LPEVRDGLKP…ADGEVSDEDL (470 aa)). Residue tyrosine 130 is the O-(5'-phospho-DNA)-tyrosine intermediate of the active site. The GyrA-box signature appears at 538-544 (QKRGGKG). The tract at residues 822–842 (EDEAAESISESDADTAESPEA) is disordered.

It belongs to the type II topoisomerase GyrA/ParC subunit family. Heterotetramer, composed of two GyrA and two GyrB chains. In the heterotetramer, GyrA contains the active site tyrosine that forms a transient covalent intermediate with DNA, while GyrB binds cofactors and catalyzes ATP hydrolysis.

Its subcellular location is the cytoplasm. The catalysed reaction is ATP-dependent breakage, passage and rejoining of double-stranded DNA.. Its activity is regulated as follows. Inhibited by 4-quinoline drugs (nalidixic acid, ciprofloxacin, ofloxacin), although it is much less sensitive than the corresponding enzyme from E.coli. Its function is as follows. A type II topoisomerase that negatively supercoils closed circular double-stranded (ds) DNA in an ATP-dependent manner to modulate DNA topology and maintain chromosomes in an underwound state. Negative supercoiling favors strand separation, and DNA replication, transcription, recombination and repair, all of which involve strand separation. Also able to catalyze the interconversion of other topological isomers of dsDNA rings, including catenanes and knotted rings. Type II topoisomerases break and join 2 DNA strands simultaneously in an ATP-dependent manner. This chain is DNA gyrase subunit A, found in Mycolicibacterium smegmatis (strain ATCC 700084 / mc(2)155) (Mycobacterium smegmatis).